The chain runs to 631 residues: Phosphomethylpyrimidine synthase (631 aa).

Substrate-binding positions include Asn239, Met268, Tyr297, His333, 353 to 355 (SRG), 394 to 397 (DGLR), and Glu433. His437 is a Zn(2+) binding site. A substrate-binding site is contributed by Tyr460. His501 lines the Zn(2+) pocket. 3 residues coordinate [4Fe-4S] cluster: Cys581, Cys584, and Cys589.

The protein belongs to the ThiC family. As to quaternary structure, homodimer. Requires [4Fe-4S] cluster as cofactor.

It catalyses the reaction 5-amino-1-(5-phospho-beta-D-ribosyl)imidazole + S-adenosyl-L-methionine = 4-amino-2-methyl-5-(phosphooxymethyl)pyrimidine + CO + 5'-deoxyadenosine + formate + L-methionine + 3 H(+). It participates in cofactor biosynthesis; thiamine diphosphate biosynthesis. Functionally, catalyzes the synthesis of the hydroxymethylpyrimidine phosphate (HMP-P) moiety of thiamine from aminoimidazole ribotide (AIR) in a radical S-adenosyl-L-methionine (SAM)-dependent reaction. The chain is Phosphomethylpyrimidine synthase from Shigella boydii serotype 4 (strain Sb227).